An 85-amino-acid polypeptide reads, in one-letter code: ATP synthase subunit c (85 aa).

The next 2 membrane-spanning stretches (helical) occupy residues 10 to 30 (IAVAIIVGLCAVGTAIGFAVL) and 53 to 73 (FIIAGLLDAVPMIGIVIALLF).

It belongs to the ATPase C chain family. As to quaternary structure, F-type ATPases have 2 components, F(1) - the catalytic core - and F(0) - the membrane proton channel. F(1) has five subunits: alpha(3), beta(3), gamma(1), delta(1), epsilon(1). F(0) has three main subunits: a(1), b(2) and c(10-14). The alpha and beta chains form an alternating ring which encloses part of the gamma chain. F(1) is attached to F(0) by a central stalk formed by the gamma and epsilon chains, while a peripheral stalk is formed by the delta and b chains.

The protein resides in the cell inner membrane. Its function is as follows. F(1)F(0) ATP synthase produces ATP from ADP in the presence of a proton or sodium gradient. F-type ATPases consist of two structural domains, F(1) containing the extramembraneous catalytic core and F(0) containing the membrane proton channel, linked together by a central stalk and a peripheral stalk. During catalysis, ATP synthesis in the catalytic domain of F(1) is coupled via a rotary mechanism of the central stalk subunits to proton translocation. In terms of biological role, key component of the F(0) channel; it plays a direct role in translocation across the membrane. A homomeric c-ring of between 10-14 subunits forms the central stalk rotor element with the F(1) delta and epsilon subunits. The protein is ATP synthase subunit c of Vibrio cholerae serotype O1 (strain ATCC 39315 / El Tor Inaba N16961).